The primary structure comprises 74 residues: ATP synthase subunit c (74 aa).

2 helical membrane-spanning segments follow: residues leucine 5–glycine 25 and leucine 49–leucine 69.

The protein belongs to the ATPase C chain family. As to quaternary structure, F-type ATPases have 2 components, F(1) - the catalytic core - and F(0) - the membrane proton channel. F(1) has five subunits: alpha(3), beta(3), gamma(1), delta(1), epsilon(1). F(0) has four main subunits: a(1), b(1), b'(1) and c(10-14). The alpha and beta chains form an alternating ring which encloses part of the gamma chain. F(1) is attached to F(0) by a central stalk formed by the gamma and epsilon chains, while a peripheral stalk is formed by the delta, b and b' chains.

The protein resides in the cell inner membrane. Functionally, f(1)F(0) ATP synthase produces ATP from ADP in the presence of a proton or sodium gradient. F-type ATPases consist of two structural domains, F(1) containing the extramembraneous catalytic core and F(0) containing the membrane proton channel, linked together by a central stalk and a peripheral stalk. During catalysis, ATP synthesis in the catalytic domain of F(1) is coupled via a rotary mechanism of the central stalk subunits to proton translocation. In terms of biological role, key component of the F(0) channel; it plays a direct role in translocation across the membrane. A homomeric c-ring of between 10-14 subunits forms the central stalk rotor element with the F(1) delta and epsilon subunits. This Roseobacter denitrificans (strain ATCC 33942 / OCh 114) (Erythrobacter sp. (strain OCh 114)) protein is ATP synthase subunit c.